A 151-amino-acid polypeptide reads, in one-letter code: MARLHSGKRGSSGSTRPLRTEVPEWVSMSAEDIEAKIVEMAKDGKQSAIIGNILRDMYGVPSVKLVTGKSVSSIMKEAGFYTEVPEDLFNLMKKAINLRNHLENNPRDTHSTVGLKLIESKIRRLVKYYRGTKVLPAKWRYSPDTARLLVE.

The segment at 1-20 (MARLHSGKRGSSGSTRPLRT) is disordered.

Belongs to the universal ribosomal protein uS15 family. In terms of assembly, part of the 30S ribosomal subunit.

In Methanococcus maripaludis (strain C7 / ATCC BAA-1331), this protein is Small ribosomal subunit protein uS15.